A 297-amino-acid chain; its full sequence is D-aminoacyl-tRNA deacylase (297 aa).

The protein belongs to the DtdA deacylase family. In terms of assembly, monomer. The cofactor is Zn(2+).

The catalysed reaction is a D-aminoacyl-tRNA + H2O = a tRNA + a D-alpha-amino acid + H(+). The enzyme catalyses glycyl-tRNA(Ala) + H2O = tRNA(Ala) + glycine + H(+). D-aminoacyl-tRNA deacylase with broad substrate specificity. By recycling D-aminoacyl-tRNA to D-amino acids and free tRNA molecules, this enzyme counteracts the toxicity associated with the formation of D-aminoacyl-tRNA entities in vivo. In Methanosarcina acetivorans (strain ATCC 35395 / DSM 2834 / JCM 12185 / C2A), this protein is D-aminoacyl-tRNA deacylase.